Consider the following 255-residue polypeptide: DNA polymerase epsilon subunit C (255 aa).

The tract at residues 109 to 255 (KTSSGLHKLS…DEDEASADDG (147 aa)) is disordered. A compositionally biased stretch (acidic residues) spans 135–156 (MEEDIPEEDLQEDDEMDVDETE). The segment covering 171 to 184 (KASASAKSILSAFK) has biased composition (low complexity). Acidic residues-rich tracts occupy residues 199 to 219 (TEED…EIDP) and 236 to 255 (DLDE…ADDG).

As to quaternary structure, heterotetramer. Consists of four subunits: POL2, DPB2, DPB3 and DPB4.

It localises to the nucleus. As accessory component of the DNA polymerase epsilon (DNA polymerase II) participates in chromosomal DNA replication. The chain is DNA polymerase epsilon subunit C (DPB3) from Candida glabrata (strain ATCC 2001 / BCRC 20586 / JCM 3761 / NBRC 0622 / NRRL Y-65 / CBS 138) (Yeast).